The sequence spans 281 residues: Microtubule-associated protein RP/EB family member 3 (281 aa).

Residues 14-116 (NLSRHDMLAW…FIQWFKKFFD (103 aa)) form the Calponin-homology (CH) domain. Positions 157–181 (VPQRTSPTGPKNMQTSGRLSNVAPP) are disordered. Residues 158–175 (PQRTSPTGPKNMQTSGRL) show a composition bias toward polar residues. Residues S162 and S176 each carry the phosphoserine modification. An EB1 C-terminal domain is found at 194–264 (GGHETDAQIL…LYATEEGFAP (71 aa)). The tract at residues 217-260 (DGLEKERDFYFSKLRDIELICQEHESENSPVISGIIGILYATEE) is APC-binding. The tract at residues 217 to 281 (DGLEKERDFY…EHQQEDQDEY (65 aa)) is DCTN1-binding. The tract at residues 261-281 (GFAPPEDDEIEEHQQEDQDEY) is disordered. Positions 272 to 281 (EHQQEDQDEY) are enriched in basic and acidic residues.

Belongs to the MAPRE family. In terms of assembly, homodimer. Heterodimer with MAPRE1. Binds monomeric and polymerized GTP-bound tubulin. Interacts with APC2. Interacts with DCTN1 and SRCIN1. Binds to the C-terminal domain of APC. Interacts (via C-terminus) with CLIP1. Interacts with SLAIN2 and SLAIN1. Interacts with AKAP9. Interacts with PDE4DIP. Interacts with PDE4DIP isoform 13/MMG8/SMYLE; this interaction is required for its recruitment to the Golgi apparatus. Predominantly expressed in brain and muscle.

It is found in the cytoplasm. The protein localises to the cytoskeleton. Its function is as follows. Plus-end tracking protein (+TIP) that binds to the plus-end of microtubules and regulates the dynamics of the microtubule cytoskeleton. Promotes microtubule growth. May be involved in spindle function by stabilizing microtubules and anchoring them at centrosomes. Also acts as a regulator of minus-end microtubule organization: interacts with the complex formed by AKAP9 and PDE4DIP, leading to recruit CAMSAP2 to the Golgi apparatus, thereby tethering non-centrosomal minus-end microtubules to the Golgi, an important step for polarized cell movement. Promotes elongation of CAMSAP2-decorated microtubule stretches on the minus-end of microtubules. The chain is Microtubule-associated protein RP/EB family member 3 (MAPRE3) from Homo sapiens (Human).